Consider the following 140-residue polypeptide: Large ribosomal subunit protein uL16 (140 aa).

A compositionally biased stretch (basic residues) spans Met1–Lys14. Residues Met1 to Thr20 are disordered.

It belongs to the universal ribosomal protein uL16 family. Part of the 50S ribosomal subunit.

Functionally, binds 23S rRNA and is also seen to make contacts with the A and possibly P site tRNAs. This is Large ribosomal subunit protein uL16 from Geotalea daltonii (strain DSM 22248 / JCM 15807 / FRC-32) (Geobacter daltonii).